The following is a 780-amino-acid chain: Striatin (780 aa).

The stretch at 53–120 (LHFLQHEWAR…QERAKYHKLK (68 aa)) forms a coiled coil. The interval 55-63 (FLQHEWARF) is caveolin-binding. Positions 124-150 (ELNQGDMKPPSYDSDEGNETEVQPQQN) are disordered. The residue at position 137 (S137) is a Phosphoserine. Residues 149–166 (QNSQLMWKQGRQLLRQYL) form a calmodulin-binding region. T225 carries the phosphothreonine modification. 4 positions are modified to phosphoserine: S227, S229, S245, and S259. Disordered regions lie at residues 289 to 310 (DFLV…GTDW) and 365 to 387 (DELP…RLPE). Positions 299 to 310 (NESRSAGDGTDW) are enriched in basic and acidic residues. WD repeat units lie at residues 461–500 (SHFD…PAKK), 514–553 (AHKG…IDPY), 567–606 (GHTD…PALS), 662–701 (NSSC…LIHS), 704–743 (AHLE…CIQE), and 750–780 (KFEE…KVFV).

This sequence belongs to the WD repeat striatin family. Part of the core of STRIPAK complexes composed of PP2A catalytic and scaffolding subunits, the striatins (PP2A regulatory subunits), the striatin-associated proteins MOB4, STRIP1 and STRIP2, PDCD10 and members of the STE20 kinases, such as STK24 and STK26. Interacts with CTTNBP2; this interaction may regulate dendritic spine distribution of STRN. Activation of glutamate receptors weakens the interaction with CTTNBP2. As to expression, preferentially expressed in brain.

It localises to the cytoplasm. It is found in the membrane. The protein localises to the cell projection. The protein resides in the dendritic spine. Calmodulin-binding scaffolding protein which is the center of the striatin-interacting phosphatase and kinase (STRIPAK) complexes. STRIPAK complexes have critical roles in protein (de)phosphorylation and are regulators of multiple signaling pathways including Hippo, MAPK, nuclear receptor and cytoskeleton remodeling. Different types of STRIPAK complexes are involved in a variety of biological processes such as cell growth, differentiation, apoptosis, metabolism and immune regulation. This Homo sapiens (Human) protein is Striatin (STRN).